A 137-amino-acid chain; its full sequence is uncharacterized protein (137 aa).

The chain crosses the membrane as a helical span at residues 111-131; it reads LAVGVLVGSNLVVGSLVFALL.

The protein resides in the membrane. This is an uncharacterized protein from Saccharomyces cerevisiae (strain ATCC 204508 / S288c) (Baker's yeast).